The following is a 472-amino-acid chain: MAGGEAGVTLGQPHLSRQDLTTLDVTKLTPLSHEVISRQATINIGTIGHVAHGKSTVVKAISGVHTVRFKNELERNITIKLGYANAKIYQLDDPSCPRPECYRSCGSSMPDEFPTDIPGTKGNFRLVRHVSFVDCPGHDILMATMLNGAAVMDAALLLIAGNESCPQPQTSEHLAAIEIMKLKHILILQNKIDLVKERQAKEQYEQILAFVQGTVAEGAPIIPISAQLKYNIEVVCEYIVKKIPVPPRDFTSEPRLIVIRSFDVNKPGCEVDDLKGGVAGGSILKGVLKVGQETEVRPGIVSKDSEGKLMCKSIFSKIVSLFAEHNDLQYAAPGGLIGVGTKIDPTLCRADRMVGQILGAVGALPEIFTELEISYFLLRRLLGVRTEGDKKAAKVQKLSKNEVLMVNIGSLSTGGRVSAVKADLGKIVLTNPVCTEVGEKIALSRRVEKHWRLIGWGQIRRGVTIKPTVDDD.

Ala2 carries the post-translational modification N-acetylalanine. Residue Ser16 is modified to Phosphoserine. The 210-residue stretch at 39–248 (QATINIGTIG…IVKKIPVPPR (210 aa)) folds into the tr-type G domain. The G1 stretch occupies residues 48–55 (GHVAHGKS). Residue 51–56 (AHGKST) coordinates GTP. A G2 region spans residues 76 to 80 (NITIK). The interval 134–137 (DCPG) is G3. GTP contacts are provided by residues 190–193 (NKID) and 225–227 (SAQ). Positions 190–193 (NKID) are G4. The G5 stretch occupies residues 225–227 (SAQ).

The protein belongs to the TRAFAC class translation factor GTPase superfamily. Classic translation factor GTPase family. EIF2G subfamily. As to quaternary structure, eIF2 is a heterotrimer composed of an alpha, a beta and a gamma chain. eIF2 is member of the 43S pre-initiation complex (43S PIC). As to expression, specifically expressed in testis at the mRNA level.

The enzyme catalyses GTP + H2O = GDP + phosphate + H(+). Functionally, member of the eIF2 complex that functions in the early steps of protein synthesis by forming a ternary complex with GTP and initiator tRNA. This complex binds to a 40S ribosomal subunit, followed by mRNA binding to form the 43S pre-initiation complex (43S PIC). Junction of the 60S ribosomal subunit to form the 80S initiation complex is preceded by hydrolysis of the GTP bound to eIF2 and release of an eIF2-GDP binary complex. In order for eIF2 to recycle and catalyze another round of initiation, the GDP bound to eIF2 must exchange with GTP by way of a reaction catalyzed by eIF-2B. This chain is Eukaryotic translation initiation factor 2 subunit 3B, found in Homo sapiens (Human).